A 481-amino-acid polypeptide reads, in one-letter code: Aspartyl/glutamyl-tRNA(Asn/Gln) amidotransferase subunit B (481 aa).

Positions 29–50 (SSSKSSHTDPKNTNISPIDLGH) are disordered.

It belongs to the GatB/GatE family. GatB subfamily. In terms of assembly, heterotrimer of A, B and C subunits.

The enzyme catalyses L-glutamyl-tRNA(Gln) + L-glutamine + ATP + H2O = L-glutaminyl-tRNA(Gln) + L-glutamate + ADP + phosphate + H(+). It catalyses the reaction L-aspartyl-tRNA(Asn) + L-glutamine + ATP + H2O = L-asparaginyl-tRNA(Asn) + L-glutamate + ADP + phosphate + 2 H(+). In terms of biological role, allows the formation of correctly charged Asn-tRNA(Asn) or Gln-tRNA(Gln) through the transamidation of misacylated Asp-tRNA(Asn) or Glu-tRNA(Gln) in organisms which lack either or both of asparaginyl-tRNA or glutaminyl-tRNA synthetases. The reaction takes place in the presence of glutamine and ATP through an activated phospho-Asp-tRNA(Asn) or phospho-Glu-tRNA(Gln). The chain is Aspartyl/glutamyl-tRNA(Asn/Gln) amidotransferase subunit B from Malacoplasma penetrans (strain HF-2) (Mycoplasma penetrans).